We begin with the raw amino-acid sequence, 191 residues long: Leucyl/phenylalanyl-tRNA--protein transferase (191 aa).

The protein belongs to the L/F-transferase family.

The protein localises to the cytoplasm. It carries out the reaction N-terminal L-lysyl-[protein] + L-leucyl-tRNA(Leu) = N-terminal L-leucyl-L-lysyl-[protein] + tRNA(Leu) + H(+). The catalysed reaction is N-terminal L-arginyl-[protein] + L-leucyl-tRNA(Leu) = N-terminal L-leucyl-L-arginyl-[protein] + tRNA(Leu) + H(+). It catalyses the reaction L-phenylalanyl-tRNA(Phe) + an N-terminal L-alpha-aminoacyl-[protein] = an N-terminal L-phenylalanyl-L-alpha-aminoacyl-[protein] + tRNA(Phe). Its function is as follows. Functions in the N-end rule pathway of protein degradation where it conjugates Leu, Phe and, less efficiently, Met from aminoacyl-tRNAs to the N-termini of proteins containing an N-terminal arginine or lysine. The polypeptide is Leucyl/phenylalanyl-tRNA--protein transferase (Trichormus variabilis (strain ATCC 29413 / PCC 7937) (Anabaena variabilis)).